Consider the following 413-residue polypeptide: Peptidase T (413 aa).

Residue His-81 participates in Zn(2+) binding. Asp-83 is a catalytic residue. A Zn(2+)-binding site is contributed by Asp-143. Catalysis depends on Glu-178, which acts as the Proton acceptor. Residues Glu-179, Asp-201, and His-383 each contribute to the Zn(2+) site.

Belongs to the peptidase M20B family. Zn(2+) is required as a cofactor.

It is found in the cytoplasm. It carries out the reaction Release of the N-terminal residue from a tripeptide.. Its function is as follows. Cleaves the N-terminal amino acid of tripeptides. In Lactococcus lactis subsp. cremoris (Streptococcus cremoris), this protein is Peptidase T.